A 555-amino-acid polypeptide reads, in one-letter code: Connector enhancer of kinase suppressor of ras 3 (555 aa).

In terms of domain architecture, SAM spans 7-72 (WSPKQVVDWT…LEAVDLLCAL (66 aa)). The region spanning 80–174 (NMKNLVLKLR…TTVQKDCFVA (95 aa)) is the CRIC domain. A PDZ domain is found at 211-293 (EVHLPNIKPG…GVVLLLKKRP (83 aa)). 3 disordered regions span residues 309 to 334 (WKPP…DTSL), 347 to 390 (PPPP…FLDQ), and 517 to 537 (IPFQ…KSSS). The 222-residue stretch at 325-546 (SPESTMDTSL…STEPSLLVSW (222 aa)) folds into the DUF1170 domain. S381 and S383 each carry phosphoserine.

The protein belongs to the CNKSR family. In terms of assembly, interacts with epithelial sodium channel ENaC. Interacts directly with SCNN1A (ENaC subunit alpha) and SCNN1B (ENaC subunit beta) C-terminal tails. Interacts with ENaC regulatory proteins NEDD4L, RAF1 and SGK1.

The protein resides in the cytoplasm. It is found in the apical cell membrane. Involved in transepithelial sodium transport. Regulates aldosterone-induced and epithelial sodium channel (ENaC)-mediated sodium transport through regulation of ENaC cell surface expression. Acts as a scaffold protein coordinating the assembly of an ENaC-regulatory complex (ERC). The polypeptide is Connector enhancer of kinase suppressor of ras 3 (CNKSR3) (Homo sapiens (Human)).